The following is a 190-amino-acid chain: Peptidyl-tRNA hydrolase (190 aa).

A tRNA-binding site is contributed by F14. H19 functions as the Proton acceptor in the catalytic mechanism. Residues M64, N66, and N112 each coordinate tRNA.

This sequence belongs to the PTH family. In terms of assembly, monomer.

It is found in the cytoplasm. It carries out the reaction an N-acyl-L-alpha-aminoacyl-tRNA + H2O = an N-acyl-L-amino acid + a tRNA + H(+). Functionally, hydrolyzes ribosome-free peptidyl-tRNAs (with 1 or more amino acids incorporated), which drop off the ribosome during protein synthesis, or as a result of ribosome stalling. In terms of biological role, catalyzes the release of premature peptidyl moieties from peptidyl-tRNA molecules trapped in stalled 50S ribosomal subunits, and thus maintains levels of free tRNAs and 50S ribosomes. This Staphylococcus aureus (strain bovine RF122 / ET3-1) protein is Peptidyl-tRNA hydrolase.